The chain runs to 354 residues: Methionine import ATP-binding protein MetN (354 aa).

In terms of domain architecture, ABC transporter spans 8–250; that stretch reads LDHIDITFRQ…PKEALTQKFI (243 aa). 42 to 49 serves as a coordination point for ATP; it reads GYSGAGKS.

This sequence belongs to the ABC transporter superfamily. Methionine importer (TC 3.A.1.24) family. The complex is composed of two ATP-binding proteins (MetN), two transmembrane proteins (MetI) and a solute-binding protein (MetQ).

The protein localises to the cell membrane. It carries out the reaction L-methionine(out) + ATP + H2O = L-methionine(in) + ADP + phosphate + H(+). The catalysed reaction is D-methionine(out) + ATP + H2O = D-methionine(in) + ADP + phosphate + H(+). Its function is as follows. Part of the ABC transporter complex MetNIQ involved in methionine import. Responsible for energy coupling to the transport system. The sequence is that of Methionine import ATP-binding protein MetN from Streptococcus pyogenes serotype M6 (strain ATCC BAA-946 / MGAS10394).